The following is an 81-amino-acid chain: MWPPLLLLLLLLPAAPVPTAKAAPHPDANTQEGLQNLLQGVGAGGDGELRADSHLAPGSGCIDGAVVATRPESRGGRPAVP.

A signal peptide spans 1 to 22 (MWPPLLLLLLLLPAAPVPTAKA).

The protein resides in the secreted. The sequence is that of RBAK downstream neighbor protein (RBAKDN) from Homo sapiens (Human).